We begin with the raw amino-acid sequence, 95 residues long: Aspartyl/glutamyl-tRNA(Asn/Gln) amidotransferase subunit C (95 aa).

This sequence belongs to the GatC family. Heterotrimer of A, B and C subunits.

The enzyme catalyses L-glutamyl-tRNA(Gln) + L-glutamine + ATP + H2O = L-glutaminyl-tRNA(Gln) + L-glutamate + ADP + phosphate + H(+). The catalysed reaction is L-aspartyl-tRNA(Asn) + L-glutamine + ATP + H2O = L-asparaginyl-tRNA(Asn) + L-glutamate + ADP + phosphate + 2 H(+). Functionally, allows the formation of correctly charged Asn-tRNA(Asn) or Gln-tRNA(Gln) through the transamidation of misacylated Asp-tRNA(Asn) or Glu-tRNA(Gln) in organisms which lack either or both of asparaginyl-tRNA or glutaminyl-tRNA synthetases. The reaction takes place in the presence of glutamine and ATP through an activated phospho-Asp-tRNA(Asn) or phospho-Glu-tRNA(Gln). This chain is Aspartyl/glutamyl-tRNA(Asn/Gln) amidotransferase subunit C, found in Pseudomonas putida (strain ATCC 700007 / DSM 6899 / JCM 31910 / BCRC 17059 / LMG 24140 / F1).